The primary structure comprises 216 residues: Lipoprotein signal peptidase (216 aa).

The tract at residues 1-21 is disordered; that stretch reads MATSRTAPTRAPSLRSSPALE. 3 consecutive transmembrane segments (helical) span residues 31-51, 89-109, and 114-134; these read VGALVILAVVALCVYLMDQIT, GSTWIFSLVGVGVLGFVIWYA, and STAWAILFGLLLGGLLGNLTD. Catalysis depends on residues aspartate 149 and aspartate 164. Residues 159 to 179 form a helical membrane-spanning segment; that stretch reads IFNLADVAIVFSMGLFLLLTL. The tract at residues 189–216 is disordered; it reads QRDEGAGVSSASPAGDESAADKPENLSA. Positions 207–216 are enriched in basic and acidic residues; that stretch reads AADKPENLSA.

Belongs to the peptidase A8 family.

It localises to the cell membrane. It catalyses the reaction Release of signal peptides from bacterial membrane prolipoproteins. Hydrolyzes -Xaa-Yaa-Zaa-|-(S,diacylglyceryl)Cys-, in which Xaa is hydrophobic (preferably Leu), and Yaa (Ala or Ser) and Zaa (Gly or Ala) have small, neutral side chains.. The protein operates within protein modification; lipoprotein biosynthesis (signal peptide cleavage). This protein specifically catalyzes the removal of signal peptides from prolipoproteins. The chain is Lipoprotein signal peptidase from Leifsonia xyli subsp. xyli (strain CTCB07).